Consider the following 291-residue polypeptide: MAVGKEILTKIRSVQNTQKITKAMQMVSTSKMRKTQERMRLARPYAEKVRMVMSHLAQTNTDHGIPLLESHREIRRVGFILITSDKGLCGGLNANVLKKFLAQVQEYRNQGIEEEIVCLGSKGLMACQSIGLNVIASAVNLGDTPKMEMLLGPLTELFQRYEKHEIDRIHLVYSGFVNTMRQEPRMEVLLPIGENVIGDSAPKSPFSWEYRYEPTALAVLEYLVRRYLESVVYQALSDNMASEQAARMVAMKAATDNAGNAIKELRLVYNKSRQAAITTELSEIVAGAAAV.

Belongs to the ATPase gamma chain family. F-type ATPases have 2 components, CF(1) - the catalytic core - and CF(0) - the membrane proton channel. CF(1) has five subunits: alpha(3), beta(3), gamma(1), delta(1), epsilon(1). CF(0) has three main subunits: a, b and c.

Its subcellular location is the cell inner membrane. Produces ATP from ADP in the presence of a proton gradient across the membrane. The gamma chain is believed to be important in regulating ATPase activity and the flow of protons through the CF(0) complex. This is ATP synthase gamma chain from Neisseria meningitidis serogroup C / serotype 2a (strain ATCC 700532 / DSM 15464 / FAM18).